A 371-amino-acid chain; its full sequence is Cytochrome b (371 aa).

4 helical membrane passes run 25–45, 69–90, 105–125, and 170–190; these read FGSLLLTCLMLQILTGFFLAI, WIMQNTHAIGASLFFICIYTHI, WLSGTTLLIILMATAFFGYVL, and FFALHFILPFIIISMSSIHII. Residues H75 and H89 each contribute to the heme b site. Residues H174 and H188 each contribute to the heme b site. H193 serves as a coordination point for a ubiquinone. 4 helical membrane passes run 218–238, 280–300, 312–332, and 339–358; these read YKDMTMVSIMIMLLLMVMTFA, LGGTLALFLSIIILTTTPFTH, LTQILFWTLIATFTTITWTAT, and FIYISQMTSIMYFSFFIMNP.

Belongs to the cytochrome b family. In terms of assembly, the cytochrome bc1 complex contains 3 respiratory subunits (MT-CYB, CYC1 and UQCRFS1), 2 core proteins (UQCRC1 and UQCRC2) and probably 6 low-molecular weight proteins. Heme b is required as a cofactor.

The protein resides in the mitochondrion inner membrane. Its function is as follows. Component of the ubiquinol-cytochrome c reductase complex (complex III or cytochrome b-c1 complex) that is part of the mitochondrial respiratory chain. The b-c1 complex mediates electron transfer from ubiquinol to cytochrome c. Contributes to the generation of a proton gradient across the mitochondrial membrane that is then used for ATP synthesis. The protein is Cytochrome b (MT-CYB) of Micruroides euryxanthus (Sonoran coral snake).